The primary structure comprises 529 residues: Bifunctional purine biosynthesis protein PurH (529 aa).

An MGS-like domain is found at 1–148 (MQQRRPVRRA…KNHKDVAIVV (148 aa)).

It belongs to the PurH family.

The catalysed reaction is (6R)-10-formyltetrahydrofolate + 5-amino-1-(5-phospho-beta-D-ribosyl)imidazole-4-carboxamide = 5-formamido-1-(5-phospho-D-ribosyl)imidazole-4-carboxamide + (6S)-5,6,7,8-tetrahydrofolate. It carries out the reaction IMP + H2O = 5-formamido-1-(5-phospho-D-ribosyl)imidazole-4-carboxamide. It participates in purine metabolism; IMP biosynthesis via de novo pathway; 5-formamido-1-(5-phospho-D-ribosyl)imidazole-4-carboxamide from 5-amino-1-(5-phospho-D-ribosyl)imidazole-4-carboxamide (10-formyl THF route): step 1/1. It functions in the pathway purine metabolism; IMP biosynthesis via de novo pathway; IMP from 5-formamido-1-(5-phospho-D-ribosyl)imidazole-4-carboxamide: step 1/1. This chain is Bifunctional purine biosynthesis protein PurH, found in Salmonella newport (strain SL254).